A 338-amino-acid chain; its full sequence is Anthranilate phosphoribosyltransferase (338 aa).

5-phospho-alpha-D-ribose 1-diphosphate-binding positions include glycine 81, 84–85 (GD), serine 89, 91–94 (NVST), 109–117 (KHGNRALSS), and alanine 121. Position 81 (glycine 81) interacts with anthranilate. Residue serine 93 participates in Mg(2+) binding. An anthranilate-binding site is contributed by asparagine 112. Anthranilate is bound at residue arginine 167. Mg(2+) is bound by residues aspartate 226 and glutamate 227.

It belongs to the anthranilate phosphoribosyltransferase family. As to quaternary structure, homodimer. It depends on Mg(2+) as a cofactor.

It catalyses the reaction N-(5-phospho-beta-D-ribosyl)anthranilate + diphosphate = 5-phospho-alpha-D-ribose 1-diphosphate + anthranilate. It functions in the pathway amino-acid biosynthesis; L-tryptophan biosynthesis; L-tryptophan from chorismate: step 2/5. Its function is as follows. Catalyzes the transfer of the phosphoribosyl group of 5-phosphorylribose-1-pyrophosphate (PRPP) to anthranilate to yield N-(5'-phosphoribosyl)-anthranilate (PRA). In Rhodopseudomonas palustris (strain BisB5), this protein is Anthranilate phosphoribosyltransferase.